Here is a 689-residue protein sequence, read N- to C-terminus: MTASSGTPPHQTVERARELREQLGTAQHEYYVLDRPTLSDQEYDRLFRELQGIEAEYPTLCTEDSPTRRVGAPVQSAFSPHRHLVRMLSLDNAFDLSELEDFEQSLKRVVGDAIHTSGYTVELKIDGAAVALTYREGVLVTAATRGDGTDGEDVTANVRTIRGVPLRLHGDNHPPLMEVRGEVYLPFAGFERMNEARVAAGEPVYVNPRNAAAGSMRQLDSANTAARPLRFFGYAAVLPDGSAPARSQWELLEQLSAWGVPVAPHRQRCHTIQEAEAWATVVEHETRATLGFAIDGGVVKVNDMALQDELGIRADRTPRWGVARKFAPDMALTKLRRIDVNVGRTGVLTPFAVLEPVDVGGATVTFASLHNADQIAAKDLREGDTVQVVRAGDVIPYVLGPVPEQRDGSQQPWSMPTQCPRCNTPVERYGDDVAVYCPNVACPGRQLEGLVHFSSKDALDIDGLSYARIQQLLDAGLVHDVADLFDITVDQLTSLERFAKKSAENLVAAIAAAKQQPLSRLMFGLGIRHVGAQAAQLLSRQYGSLDALMNATAEQLGAVRGIGSIIAQSVASYFADPTTRALMERLRARGLRFDEPNAVQADGVLTGATVVLTGTLPSLSRGEATALVEQAGGRVTSSVSKKTTFVVAGEEAGSKLDKAKELGVTVLTEAELLEKLSGASADASADASA.

NAD(+) is bound by residues 40–44, 89–90, and Glu122; these read DQEYD and SL. Lys124 functions as the N6-AMP-lysine intermediate in the catalytic mechanism. NAD(+) is bound by residues Arg145, Glu182, Lys300, and Lys325. Positions 419, 422, 437, and 442 each coordinate Zn(2+). In terms of domain architecture, BRCT spans 600 to 689; it reads QADGVLTGAT…SADASADASA (90 aa).

This sequence belongs to the NAD-dependent DNA ligase family. LigA subfamily. Mg(2+) serves as cofactor. Requires Mn(2+) as cofactor.

It carries out the reaction NAD(+) + (deoxyribonucleotide)n-3'-hydroxyl + 5'-phospho-(deoxyribonucleotide)m = (deoxyribonucleotide)n+m + AMP + beta-nicotinamide D-nucleotide.. DNA ligase that catalyzes the formation of phosphodiester linkages between 5'-phosphoryl and 3'-hydroxyl groups in double-stranded DNA using NAD as a coenzyme and as the energy source for the reaction. It is essential for DNA replication and repair of damaged DNA. In Gemmatimonas aurantiaca (strain DSM 14586 / JCM 11422 / NBRC 100505 / T-27), this protein is DNA ligase.